The primary structure comprises 150 residues: Linear element protein rec25 (150 aa).

Ser-11 is modified (phosphoserine).

Component of linear elements (LinEs), which are similar to synaptonemal complexes, at least composed of rec27, rec25, rec10 and mug20. Interacts with rec10; the interaction is direct.

It is found in the cytoplasm. The protein localises to the nucleus. The protein resides in the chromosome. Functionally, during meiotic DNA recombination, binds to and may help activate DNA double-strand break (DSB) hotspot sites. This is Linear element protein rec25 from Schizosaccharomyces pombe (strain 972 / ATCC 24843) (Fission yeast).